The chain runs to 312 residues: Deoxyribonuclease-1-like 1 (312 aa).

A signal peptide spans 1–35 (MPSGQPVFPRRVPDAYIAMRGLVVASLLILLVGGT). Asn102 carries N-linked (GlcNAc...) asparagine glycosylation. Glu113 is an active-site residue. Asn133 is a glycosylation site (N-linked (GlcNAc...) asparagine). His164 is an active-site residue. An intrachain disulfide couples Cys203 to Cys240. Asn239 carries N-linked (GlcNAc...) asparagine glycosylation.

It belongs to the DNase I family.

Its subcellular location is the endoplasmic reticulum. The protein is Deoxyribonuclease-1-like 1 (Dnase1l1) of Rattus norvegicus (Rat).